Reading from the N-terminus, the 947-residue chain is Bifunctional glutamine synthetase adenylyltransferase/adenylyl-removing enzyme (947 aa).

The tract at residues 1–440 is adenylyl removase; the sequence is MTPLSSPLSQ…VFNELIGDDE (440 aa). Positions 450 to 947 are adenylyl transferase; sequence SEPWREVWQD…ASWRKWLVAV (498 aa).

It belongs to the GlnE family. Mg(2+) serves as cofactor.

It carries out the reaction [glutamine synthetase]-O(4)-(5'-adenylyl)-L-tyrosine + phosphate = [glutamine synthetase]-L-tyrosine + ADP. It catalyses the reaction [glutamine synthetase]-L-tyrosine + ATP = [glutamine synthetase]-O(4)-(5'-adenylyl)-L-tyrosine + diphosphate. Functionally, involved in the regulation of glutamine synthetase GlnA, a key enzyme in the process to assimilate ammonia. When cellular nitrogen levels are high, the C-terminal adenylyl transferase (AT) inactivates GlnA by covalent transfer of an adenylyl group from ATP to specific tyrosine residue of GlnA, thus reducing its activity. Conversely, when nitrogen levels are low, the N-terminal adenylyl removase (AR) activates GlnA by removing the adenylyl group by phosphorolysis, increasing its activity. The regulatory region of GlnE binds the signal transduction protein PII (GlnB) which indicates the nitrogen status of the cell. This Salmonella schwarzengrund (strain CVM19633) protein is Bifunctional glutamine synthetase adenylyltransferase/adenylyl-removing enzyme.